We begin with the raw amino-acid sequence, 858 residues long: Volume-regulated anion channel subunit LRRC8D (858 aa).

Topologically, residues methionine 1 to proline 22 are cytoplasmic. The chain crosses the membrane as a helical span at residues tryptophan 23–threonine 48. Residues lysine 49–lysine 163 are Extracellular-facing. A disulfide bridge connects residues cysteine 54 and cysteine 354. A helical membrane pass occupies residues tyrosine 164–phenylalanine 182. The Cytoplasmic segment spans residues tryptophan 183 to tyrosine 308. The tract at residues serine 221 to threonine 251 is disordered. The segment covering arginine 227–threonine 251 has biased composition (polar residues). 3 positions are modified to phosphoserine: serine 241, serine 242, and serine 246. Residues valine 309–asparagine 328 traverse the membrane as a helical segment. Topologically, residues phenylalanine 329–tyrosine 360 are extracellular. Residues methionine 361 to tryptophan 386 traverse the membrane as a helical segment. Residues leucine 387–isoleucine 858 are Cytoplasmic-facing. LRR repeat units lie at residues asparagine 514–phenylalanine 534, histidine 538–leucine 559, asparagine 561–glutamate 582, histidine 589–valine 609, histidine 612–lysine 632, asparagine 636–leucine 657, asparagine 659–glutamine 680, arginine 684–valine 705, asparagine 707–leucine 728, lysine 730–leucine 751, asparagine 753–cysteine 774, lysine 776–leucine 797, and glutamine 799–cysteine 820.

The protein belongs to the LRRC8 family. Heterohexamer; oligomerizes with other LRRC8 proteins (LRRC8A, LRRC8B, LRRC8C and/or LRRC8E) to form a heterohexamer. In vivo, the subunit composition may depend primarily on expression levels, and heterooligomeric channels containing various proportions of the different LRRC8 proteins may coexist.

The protein resides in the cell membrane. The protein localises to the endoplasmic reticulum membrane. The enzyme catalyses chloride(in) = chloride(out). It carries out the reaction iodide(out) = iodide(in). The catalysed reaction is taurine(out) = taurine(in). Functionally, non-essential component of the volume-regulated anion channel (VRAC, also named VSOAC channel), an anion channel required to maintain a constant cell volume in response to extracellular or intracellular osmotic changes. The VRAC channel conducts iodide better than chloride and can also conduct organic osmolytes like taurine. Plays a redundant role in the efflux of amino acids, such as aspartate, in response to osmotic stress. LRRC8A and LRRC8D are required for the uptake of the drug cisplatin. Channel activity requires LRRC8A plus at least one other family member (LRRC8B, LRRC8C, LRRC8D or LRRC8E); channel characteristics depend on the precise subunit composition. Also acts as a regulator of glucose-sensing in pancreatic beta cells: VRAC currents, generated in response to hypotonicity- or glucose-induced beta cell swelling, depolarize cells, thereby causing electrical excitation, leading to increase glucose sensitivity and insulin secretion. VRAC channels containing LRRC8D inhibit transport of immunoreactive cyclic dinucleotide GMP-AMP (2'-3'-cGAMP), an immune messenger produced in response to DNA virus in the cytosol. Mediates the import of the antibiotic blasticidin-S into the cell. This Homo sapiens (Human) protein is Volume-regulated anion channel subunit LRRC8D.